Consider the following 383-residue polypeptide: Deoxyguanosinetriphosphate triphosphohydrolase-like protein (383 aa).

One can recognise an HD domain in the interval 62–198 (RLTHSLEVST…AALADDISYI (137 aa)).

This sequence belongs to the dGTPase family. Type 2 subfamily.

The polypeptide is Deoxyguanosinetriphosphate triphosphohydrolase-like protein (Rickettsia felis (strain ATCC VR-1525 / URRWXCal2) (Rickettsia azadi)).